Here is a 351-residue protein sequence, read N- to C-terminus: Leukotriene B4 receptor 1 (351 aa).

The Extracellular segment spans residues 1 to 21; it reads MAANTTSPAAPSSPGGMSLSL. Residue Asn4 is glycosylated (N-linked (GlcNAc...) asparagine). Residues 22 to 44 traverse the membrane as a helical segment; the sequence is LPIVLLSVALAVGLPGNSFVVWS. The Cytoplasmic segment spans residues 45–56; that stretch reads ILKRMQKRTVTA. The chain crosses the membrane as a helical span at residues 57-77; the sequence is LLVLNLALADLAVLLTAPFFL. Residues 78-93 are Extracellular-facing; the sequence is HFLARGTWSFREMGCR. The chain crosses the membrane as a helical span at residues 94 to 115; that stretch reads LCHYVCGISMYASVLLITIMSL. The Cytoplasmic portion of the chain corresponds to 116–140; the sequence is DRSLAVARPFMSQKVRTKAFARWVL. The helical transmembrane segment at 141–161 threads the bilayer; that stretch reads AGIWVVSFLLAIPVLVYRTVK. The Extracellular segment spans residues 162 to 179; the sequence is WNNRTLICAPNYPNKEHK. Asn164 is a glycosylation site (N-linked (GlcNAc...) asparagine). A helical transmembrane segment spans residues 180 to 200; the sequence is VFHLLFEAITGFLLPFLAVVA. Over 201–222 the chain is Cytoplasmic; sequence SYSDIGRRLQARRFRRSRRTGR. A helical membrane pass occupies residues 223–243; that stretch reads LVVLIILAFAAFWLPYHLVNL. At 244–268 the chain is on the extracellular side; sequence VEAGRTVAGWDKNSPAGQRLRLARY. A helical membrane pass occupies residues 269–289; it reads VLIALAFLSSSVNPVLYACAG. The Cytoplasmic segment spans residues 290 to 351; it reads GGLLRSAGVG…TSSTIPESSK (62 aa). 2 stretches are compositionally biased toward polar residues: residues 311-326 and 339-351; these read EVSS…QTPK and SFMT…ESSK. The tract at residues 311-351 is disordered; it reads EVSSTRRGGTLVQTPKDTPACPEPGPTDSFMTSSTIPESSK.

It belongs to the G-protein coupled receptor 1 family. Post-translationally, phosphorylated by GRK6 upon leukotriene B4 binding; which promotes desensitization. As to expression, highly expressed on activated leukocytes, including eosinophils.

It is found in the cell membrane. In terms of biological role, receptor for leukotriene B4, a potent chemoattractant involved in inflammation and immune response. This is Leukotriene B4 receptor 1 (Ltb4r) from Mus musculus (Mouse).